The chain runs to 146 residues: MKLHELKPSEGSRKERNRVGRGTGSGNGKTSGRGHKGQKARSGGGVRLGFEGGQLPLFRRIPKRGFTNINRKEFAIVNLDVLNRFEDGTEVTPELLVETGIIRNEKSGIKILSNGNIEKKLTVKANKFSAAAKEAIEAAGGKTEVI.

The span at 1–18 shows a compositional bias: basic and acidic residues; the sequence is MKLHELKPSEGSRKERNR. The disordered stretch occupies residues 1–50; it reads MKLHELKPSEGSRKERNRVGRGTGSGNGKTSGRGHKGQKARSGGGVRLGF. Residues 21 to 31 show a composition bias toward gly residues; the sequence is RGTGSGNGKTS.

It belongs to the universal ribosomal protein uL15 family. As to quaternary structure, part of the 50S ribosomal subunit.

Functionally, binds to the 23S rRNA. In Listeria monocytogenes serotype 4b (strain CLIP80459), this protein is Large ribosomal subunit protein uL15.